The sequence spans 571 residues: Serine/threonine-protein kinase Nek7 (571 aa).

The Protein kinase domain occupies 19–277 (YHVVEQVRRG…LRNPSLQPYL (259 aa)). ATP contacts are provided by residues 25 to 33 (VRRGKSSSD) and Lys-48. Residue Asp-144 is the Proton acceptor of the active site. Disordered stretches follow at residues 298–321 (SPKD…SREK) and 338–363 (TETG…ETKR). Positions 312–321 (FGKERVSREK) are enriched in basic and acidic residues. The segment covering 342-351 (SSSSSQPASS) has biased composition (low complexity).

This sequence belongs to the protein kinase superfamily. NEK Ser/Thr protein kinase family. NIMA subfamily.

It catalyses the reaction L-seryl-[protein] + ATP = O-phospho-L-seryl-[protein] + ADP + H(+). The enzyme catalyses L-threonyl-[protein] + ATP = O-phospho-L-threonyl-[protein] + ADP + H(+). Functionally, may be involved in plant development processes. This chain is Serine/threonine-protein kinase Nek7 (NEK7), found in Arabidopsis thaliana (Mouse-ear cress).